The sequence spans 296 residues: Acetylglutamate kinase (296 aa).

Residues 68–69, R90, and N193 contribute to the substrate site; that span reads GG.

Belongs to the acetylglutamate kinase family. ArgB subfamily.

The protein resides in the cytoplasm. The enzyme catalyses N-acetyl-L-glutamate + ATP = N-acetyl-L-glutamyl 5-phosphate + ADP. It participates in amino-acid biosynthesis; L-arginine biosynthesis; N(2)-acetyl-L-ornithine from L-glutamate: step 2/4. Functionally, catalyzes the ATP-dependent phosphorylation of N-acetyl-L-glutamate. This Acidothermus cellulolyticus (strain ATCC 43068 / DSM 8971 / 11B) protein is Acetylglutamate kinase.